The primary structure comprises 454 residues: tRNA modification GTPase MnmE (454 aa).

3 residues coordinate (6S)-5-formyl-5,6,7,8-tetrahydrofolate: Arg-23, Glu-80, and Lys-120. The TrmE-type G domain maps to Gly-216–Gly-377. Asn-226 is a binding site for K(+). GTP contacts are provided by residues Asn-226–Ser-231, Thr-245–Thr-251, Asp-270–Gly-273, and Asn-335–Asp-338. Residue Ser-230 coordinates Mg(2+). K(+) is bound by residues Thr-245, Ile-247, and Thr-250. Thr-251 provides a ligand contact to Mg(2+). Lys-454 lines the (6S)-5-formyl-5,6,7,8-tetrahydrofolate pocket.

Belongs to the TRAFAC class TrmE-Era-EngA-EngB-Septin-like GTPase superfamily. TrmE GTPase family. As to quaternary structure, homodimer. Heterotetramer of two MnmE and two MnmG subunits. K(+) is required as a cofactor.

The protein resides in the cytoplasm. Functionally, exhibits a very high intrinsic GTPase hydrolysis rate. Involved in the addition of a carboxymethylaminomethyl (cmnm) group at the wobble position (U34) of certain tRNAs, forming tRNA-cmnm(5)s(2)U34. This is tRNA modification GTPase MnmE from Sodalis glossinidius (strain morsitans).